The chain runs to 320 residues: GMP reductase (320 aa).

Cys174 serves as the catalytic Thioimidate intermediate. Residue 203 to 226 coordinates NADP(+); that stretch reads IIADGGLRVHGDIAKSIRMGASFC.

This sequence belongs to the IMPDH/GMPR family. GuaC type 2 subfamily.

The catalysed reaction is IMP + NH4(+) + NADP(+) = GMP + NADPH + 2 H(+). Functionally, catalyzes the irreversible NADPH-dependent deamination of GMP to IMP. It functions in the conversion of nucleobase, nucleoside and nucleotide derivatives of G to A nucleotides, and in maintaining the intracellular balance of A and G nucleotides. The chain is GMP reductase from Mycoplasma mycoides subsp. mycoides SC (strain CCUG 32753 / NCTC 10114 / PG1).